The sequence spans 225 residues: Thymidylate kinase (225 aa).

Residue 9–16 coordinates ATP; it reads GIEGCGKT.

It belongs to the thymidylate kinase family.

The enzyme catalyses dTMP + ATP = dTDP + ADP. In terms of biological role, phosphorylation of dTMP to form dTDP in both de novo and salvage pathways of dTTP synthesis. In Citrifermentans bemidjiense (strain ATCC BAA-1014 / DSM 16622 / JCM 12645 / Bem) (Geobacter bemidjiensis), this protein is Thymidylate kinase.